A 326-amino-acid chain; its full sequence is Zinc-dependent endopolyphosphatase (326 aa).

Topologically, residues 1-9 (MEDKRKRRA) are cytoplasmic. The chain crosses the membrane as a helical span at residues 10–30 (ATLSTALILFVACCVYTLYIF). Residues 31–326 (KFDNPRLSPP…DYELIQVQCS (296 aa)) lie on the Vacuolar side of the membrane. 2 N-linked (GlcNAc...) asparagine glycosylation sites follow: Asn-90 and Asn-241.

This sequence belongs to the metallophosphoesterase superfamily. Interacts with PPN1. It depends on Zn(2+) as a cofactor. The cofactor is Co(2+). Mg(2+) serves as cofactor.

The protein localises to the vacuole membrane. It carries out the reaction [phosphate](n+1) + n H2O = (n+1) phosphate + n H(+). Not sensitive to heparin inhibition. In terms of biological role, catalyzes the hydrolysis of inorganic polyphosphate (polyP) chains of many hundreds of phosphate residues into shorter lengths. Exclusively shows endopolyphosphatase activity, cleaving inside the polyP chain. Together with PPN1, responsible for a substantial fraction of polyphosphatase activity that is necessary to mobilize polyP stores in response to phosphate scarcity. The sequence is that of Zinc-dependent endopolyphosphatase from Saccharomyces cerevisiae (strain ATCC 204508 / S288c) (Baker's yeast).